Reading from the N-terminus, the 108-residue chain is Nucleoid-associated protein Bmul_1447/BMULJ_01796 (108 aa).

The tract at residues 84 to 108 (EATSQEKMSGMTSGLPLPPGFKLPF) is disordered. Polar residues predominate over residues 85–95 (ATSQEKMSGMT). The segment covering 99–108 (PLPPGFKLPF) has biased composition (pro residues).

It belongs to the YbaB/EbfC family. In terms of assembly, homodimer.

It is found in the cytoplasm. It localises to the nucleoid. Binds to DNA and alters its conformation. May be involved in regulation of gene expression, nucleoid organization and DNA protection. The polypeptide is Nucleoid-associated protein Bmul_1447/BMULJ_01796 (Burkholderia multivorans (strain ATCC 17616 / 249)).